A 483-amino-acid polypeptide reads, in one-letter code: NADH-quinone oxidoreductase subunit N (483 aa).

The next 13 helical transmembrane spans lie at 9–29 (LVLP…WGAF), 35–55 (PLFT…AVVG), 69–89 (AAAT…IVLG), 104–124 (AVLV…GDLI), 158–178 (FVLG…IYGF), 201–221 (VGLL…VSAA), 234–254 (APTS…MMMF), 272–292 (VLII…LAQT), 297–317 (LWAY…ATGG), 325–345 (LLFM…LQAL), 368–388 (IAVA…FSGF), 404–424 (VLLQ…AFYY), and 449–469 (AVGF…LIWL).

It belongs to the complex I subunit 2 family. As to quaternary structure, NDH-1 is composed of 14 different subunits. Subunits NuoA, H, J, K, L, M, N constitute the membrane sector of the complex.

The protein resides in the cell inner membrane. It catalyses the reaction a quinone + NADH + 5 H(+)(in) = a quinol + NAD(+) + 4 H(+)(out). NDH-1 shuttles electrons from NADH, via FMN and iron-sulfur (Fe-S) centers, to quinones in the respiratory chain. The immediate electron acceptor for the enzyme in this species is believed to be ubiquinone. Couples the redox reaction to proton translocation (for every two electrons transferred, four hydrogen ions are translocated across the cytoplasmic membrane), and thus conserves the redox energy in a proton gradient. This is NADH-quinone oxidoreductase subunit N from Caulobacter sp. (strain K31).